Consider the following 687-residue polypeptide: Protein-glutamine gamma-glutamyltransferase 2 (687 aa).

Position 2 is an N-acetylalanine (A2). Phosphoserine is present on S60. 2 disulfide bridges follow: C230–C370 and C370–C371. Catalysis depends on residues C277, H335, and D358. Positions 398, 400, 437, 447, and 452 each coordinate Ca(2+). K468 carries the post-translational modification N6-acetyllysine. GTP is bound at residue 476–483 (RIRVGQSM). A Ca(2+)-binding site is contributed by E539. Position 580–583 (580–583 (RDLY)) interacts with GTP. Q633 participates in a covalent cross-link: Isoglutamyl lysine isopeptide (Gln-Lys) (interchain with K-?).

The protein belongs to the transglutaminase superfamily. Transglutaminase family. As to quaternary structure, monomer. Interacts with phospholipase C; promoting alpha-1 adrenergic receptor signaling. Interacts with PLCD1. Homooligomer. The cofactor is Ca(2+). In terms of processing, disulfide bond formation inactivates the calcium-dependent acyltransferase activity. Cys-370 can form disulfide bonds with both Cys-230 and Cys-371: formation of a disulfide bond between Cys-230 and Cys-370 facilitates formation of the disulfide between Cys-370 and Cys-371, which promotes inactivation of the acyltransferase activity. May also form interchain disulfids between Cys-230 and Cys-370. Ca(2+) protects against disulfide bond formation and inactivation. Auto-transglutaminated: Forms covalent cross-links mediated by transglutaminase between Gln-633 and the epsilon-amino group of a lysine residue of itself or HMGB1, forming homopolymers and heteropolymers, respectively. Post-translationally, S-nitrosylated, leading to inactivation of the acyltransferase activity.

It localises to the cytoplasm. Its subcellular location is the cytosol. It is found in the nucleus. The protein resides in the chromosome. The protein localises to the secreted. It localises to the extracellular space. Its subcellular location is the extracellular matrix. It is found in the cell membrane. The protein resides in the mitochondrion. The protein localises to the perinuclear region. It carries out the reaction L-glutaminyl-[protein] + L-lysyl-[protein] = [protein]-L-lysyl-N(6)-5-L-glutamyl-[protein] + NH4(+). The catalysed reaction is L-glutaminyl-[protein] + serotonin = 5-serotonyl-L-glutamyl-[protein] + NH4(+). It catalyses the reaction L-glutaminyl-[protein] + dopamine = 5-dopaminyl-L-glutamyl-[protein] + NH4(+). The enzyme catalyses L-glutaminyl-[protein] + histamine = 5-histaminyl-L-glutamyl-[protein] + NH4(+). It carries out the reaction L-glutaminyl-[protein] + (R)-noradrenaline = 5-(R)-noradrenalinyl-L-glutamyl-[protein] + NH4(+). The catalysed reaction is L-glutaminyl-[protein] + H2O = L-glutamyl-[protein] + NH4(+). With respect to regulation, acyltransferase activity is regulated by the binding of GTP and Ca(2+): inactivated by GTP, which stabilizes its closed structure, thereby obstructing the accessibility of substrates to the active sites. In contrast, Ca(2+) acts as a cofactor by inducing conformational change to the active open form. In absence of Ca(2+), Mg(2+) may bind Ca(2+)-binding sites, promoting GTP-binding and subsequent inhibition of the acyltransferase activity. Extracellularly reduced and activated by CLIC3. Specifically inhibited by compound VA4 ((S)-Benzyl (6-Acrylamido-1-(4-((5-(dimethylamino)naphthalen-1-yl)sulfonyl)piperazin-1-yl)-1-oxohexan-2-yl)carbamate), which specifically abolishes both the transamidation and GTP-binding activities. Its function is as follows. Calcium-dependent acyltransferase that catalyzes the formation of covalent bonds between peptide-bound glutamine and various primary amines, such as gamma-amino group of peptide-bound lysine, or mono- and polyamines, thereby producing cross-linked or aminated proteins, respectively. Involved in many biological processes, such as bone development, angiogenesis, wound healing, cellular differentiation, chromatin modification and apoptosis. Acts as a protein-glutamine gamma-glutamyltransferase by mediating the cross-linking of proteins, such as ACO2, HSPB6, FN1, HMGB1, RAP1GDS1, SLC25A4/ANT1, SPP1 and WDR54. Under physiological conditions, the protein cross-linking activity is inhibited by GTP; inhibition is relieved by Ca(2+) in response to various stresses. When secreted, catalyzes cross-linking of proteins of the extracellular matrix, such as FN1 and SPP1 resulting in the formation of scaffolds. Plays a key role during apoptosis, both by (1) promoting the cross-linking of cytoskeletal proteins resulting in condensation of the cytoplasm, and by (2) mediating cross-linking proteins of the extracellular matrix, resulting in the irreversible formation of scaffolds that stabilize the integrity of the dying cells before their clearance by phagocytosis, thereby preventing the leakage of harmful intracellular components. In addition to protein cross-linking, can use different monoamine substrates to catalyze a vast array of protein post-translational modifications: mediates aminylation of serotonin, dopamine, noradrenaline or histamine into glutamine residues of target proteins to generate protein serotonylation, dopaminylation, noradrenalinylation or histaminylation, respectively. Mediates protein serotonylation of small GTPases during activation and aggregation of platelets, leading to constitutive activation of these GTPases. Plays a key role in chromatin organization by mediating serotonylation and dopaminylation of histone H3. Catalyzes serotonylation of 'Gln-5' of histone H3 (H3Q5ser) during serotonergic neuron differentiation, thereby facilitating transcription. Acts as a mediator of neurotransmission-independent role of nuclear dopamine in ventral tegmental area (VTA) neurons: catalyzes dopaminylation of 'Gln-5' of histone H3 (H3Q5dop), thereby regulating relapse-related transcriptional plasticity in the reward system. Regulates vein remodeling by mediating serotonylation and subsequent inactivation of ATP2A2/SERCA2. Also acts as a protein deamidase by mediating the side chain deamidation of specific glutamine residues of proteins to glutamate. Catalyzes specific deamidation of protein gliadin, a component of wheat gluten in the diet. May also act as an isopeptidase cleaving the previously formed cross-links. Also able to participate in signaling pathways independently of its acyltransferase activity: acts as a signal transducer in alpha-1 adrenergic receptor-mediated stimulation of phospholipase C-delta (PLCD) activity and is required for coupling alpha-1 adrenergic agonists to the stimulation of phosphoinositide lipid metabolism. Functionally, has cytotoxic activity: is able to induce apoptosis independently of its acyltransferase activity. The protein is Protein-glutamine gamma-glutamyltransferase 2 of Homo sapiens (Human).